The chain runs to 428 residues: Gamma-glutamyl phosphate reductase (428 aa).

This sequence belongs to the gamma-glutamyl phosphate reductase family.

The protein resides in the cytoplasm. It carries out the reaction L-glutamate 5-semialdehyde + phosphate + NADP(+) = L-glutamyl 5-phosphate + NADPH + H(+). The protein operates within amino-acid biosynthesis; L-proline biosynthesis; L-glutamate 5-semialdehyde from L-glutamate: step 2/2. Catalyzes the NADPH-dependent reduction of L-glutamate 5-phosphate into L-glutamate 5-semialdehyde and phosphate. The product spontaneously undergoes cyclization to form 1-pyrroline-5-carboxylate. The chain is Gamma-glutamyl phosphate reductase from Clostridium tetani (strain Massachusetts / E88).